Here is a 108-residue protein sequence, read N- to C-terminus: MVQAAILFILAGLAEIGGGYLVWLWLREARPYWYGVIGAIILVFYGIIPTLQKFPSFGRVYAAYGGVFIILAVLWGWGVDKKMPDTYDWIGAAICLVGVTVMLWAPRQ.

The next 4 helical transmembrane spans lie at 6–26 (ILFI…WLWL), 31–51 (PYWY…IPTL), 60–80 (VYAA…WGVD), and 86–106 (TYDW…LWAP).

It belongs to the UPF0060 family.

The protein localises to the cell membrane. This chain is UPF0060 membrane protein DSY4157, found in Desulfitobacterium hafniense (strain Y51).